Consider the following 365-residue polypeptide: S-adenosylmethionine:tRNA ribosyltransferase-isomerase (365 aa).

The protein belongs to the QueA family. As to quaternary structure, monomer.

Its subcellular location is the cytoplasm. The enzyme catalyses 7-aminomethyl-7-carbaguanosine(34) in tRNA + S-adenosyl-L-methionine = epoxyqueuosine(34) in tRNA + adenine + L-methionine + 2 H(+). Its pathway is tRNA modification; tRNA-queuosine biosynthesis. Functionally, transfers and isomerizes the ribose moiety from AdoMet to the 7-aminomethyl group of 7-deazaguanine (preQ1-tRNA) to give epoxyqueuosine (oQ-tRNA). In Rickettsia peacockii (strain Rustic), this protein is S-adenosylmethionine:tRNA ribosyltransferase-isomerase.